We begin with the raw amino-acid sequence, 176 residues long: Translation initiation factor IF-3 (176 aa).

This sequence belongs to the IF-3 family. As to quaternary structure, monomer.

Its subcellular location is the cytoplasm. In terms of biological role, IF-3 binds to the 30S ribosomal subunit and shifts the equilibrium between 70S ribosomes and their 50S and 30S subunits in favor of the free subunits, thus enhancing the availability of 30S subunits on which protein synthesis initiation begins. The chain is Translation initiation factor IF-3 from Nitratidesulfovibrio vulgaris (strain DSM 19637 / Miyazaki F) (Desulfovibrio vulgaris).